The primary structure comprises 446 residues: UDP-N-acetylmuramoylalanine--D-glutamate ligase (446 aa).

115-121 provides a ligand contact to ATP; the sequence is GTNGKTT.

Belongs to the MurCDEF family.

Its subcellular location is the cytoplasm. It carries out the reaction UDP-N-acetyl-alpha-D-muramoyl-L-alanine + D-glutamate + ATP = UDP-N-acetyl-alpha-D-muramoyl-L-alanyl-D-glutamate + ADP + phosphate + H(+). The protein operates within cell wall biogenesis; peptidoglycan biosynthesis. In terms of biological role, cell wall formation. Catalyzes the addition of glutamate to the nucleotide precursor UDP-N-acetylmuramoyl-L-alanine (UMA). In Pelobacter propionicus (strain DSM 2379 / NBRC 103807 / OttBd1), this protein is UDP-N-acetylmuramoylalanine--D-glutamate ligase.